A 282-amino-acid chain; its full sequence is Caspase-3 (282 aa).

Catalysis depends on residues His-131 and Cys-174.

This sequence belongs to the peptidase C14A family. As to quaternary structure, heterotetramer that consists of two anti-parallel arranged heterodimers, each one formed by a 17 kDa (p17) and a 12 kDa (p12) subunit.

It localises to the cytoplasm. It carries out the reaction Strict requirement for an Asp residue at positions P1 and P4. It has a preferred cleavage sequence of Asp-Xaa-Xaa-Asp-|- with a hydrophobic amino-acid residue at P2 and a hydrophilic amino-acid residue at P3, although Val or Ala are also accepted at this position.. Its function is as follows. Important mediator of apoptosis. At the onset of apoptosis, it proteolytically cleaves poly(ADP-ribose) polymerase PARP1 at a '216-Asp-|-Gly-217' bond. In Xenopus laevis (African clawed frog), this protein is Caspase-3 (casp3).